Consider the following 365-residue polypeptide: Ribosomal RNA large subunit methyltransferase F (365 aa).

The interval 1–50 is disordered; sequence MSKPAVKSVPSATAKTATRAANPRQKAKAPKQAKPEGKGRAKPSKDKPRA. A compositionally biased stretch (basic and acidic residues) spans 33 to 50; it reads AKPEGKGRAKPSKDKPRA.

Belongs to the methyltransferase superfamily. METTL16/RlmF family.

It is found in the cytoplasm. The catalysed reaction is adenosine(1618) in 23S rRNA + S-adenosyl-L-methionine = N(6)-methyladenosine(1618) in 23S rRNA + S-adenosyl-L-homocysteine + H(+). Specifically methylates the adenine in position 1618 of 23S rRNA. The sequence is that of Ribosomal RNA large subunit methyltransferase F from Shewanella baltica (strain OS195).